Consider the following 776-residue polypeptide: Kinesin-like protein KIN-8A (776 aa).

Disordered regions lie at residues 1–31 (MPVS…RGGA) and 80–135 (VGEV…KSSH). The segment covering 7 to 26 (ASAAGGQPWSSAAPAPASAP) has biased composition (low complexity). A compositionally biased stretch (pro residues) spans 123–132 (PPPPPAPPPK). Positions 205 to 534 (RIMVFVRLRP…LHWADRAKEI (330 aa)) constitute a Kinesin motor domain. An ATP-binding site is contributed by 297-304 (GATGAGKT). The stretch at 554 to 592 (TDQAKLVLELQKENSELRQQLARQQQKLLTVQAQTLASN) forms a coiled coil. Positions 590-611 (ASNASPQQSPAPSAQISTPCST) are disordered. Residues 593 to 604 (ASPQQSPAPSAQ) are compositionally biased toward low complexity. Residues 634–671 (AAENAQVRDLQRKVKAMEAEIEKMKKEHLLQLKQKDEF) are a coiled coil.

This sequence belongs to the TRAFAC class myosin-kinesin ATPase superfamily. Kinesin family. KIN-8 subfamily.

In Oryza sativa subsp. japonica (Rice), this protein is Kinesin-like protein KIN-8A.